Consider the following 284-residue polypeptide: L-ribulose-5-phosphate 3-epimerase UlaE (284 aa).

This sequence belongs to the L-ribulose-5-phosphate 3-epimerase family.

It carries out the reaction L-ribulose 5-phosphate = L-xylulose 5-phosphate. Its pathway is cofactor degradation; L-ascorbate degradation; D-xylulose 5-phosphate from L-ascorbate: step 3/4. Its function is as follows. Catalyzes the isomerization of L-xylulose-5-phosphate to L-ribulose-5-phosphate. Is involved in the anaerobic L-ascorbate utilization. This Escherichia coli (strain 55989 / EAEC) protein is L-ribulose-5-phosphate 3-epimerase UlaE.